The chain runs to 79 residues: Sec-independent protein translocase protein TatA (79 aa).

A helical transmembrane segment spans residues 1 to 21 (MGGFTSIWHWVIVLLVIVLLF). The disordered stretch occupies residues 48-79 (EEEAKNEPKTLDAQATQTKVHESSEIKSKQES). A compositionally biased stretch (basic and acidic residues) spans 66–79 (KVHESSEIKSKQES).

The protein belongs to the TatA/E family. The Tat system comprises two distinct complexes: a TatABC complex, containing multiple copies of TatA, TatB and TatC subunits, and a separate TatA complex, containing only TatA subunits. Substrates initially bind to the TatABC complex, which probably triggers association of the separate TatA complex to form the active translocon.

It localises to the cell inner membrane. In terms of biological role, part of the twin-arginine translocation (Tat) system that transports large folded proteins containing a characteristic twin-arginine motif in their signal peptide across membranes. TatA could form the protein-conducting channel of the Tat system. This is Sec-independent protein translocase protein TatA from Helicobacter pylori (strain ATCC 700392 / 26695) (Campylobacter pylori).